We begin with the raw amino-acid sequence, 238 residues long: ATP synthase subunit a (238 aa).

The next 5 membrane-spanning stretches (helical) occupy residues 18–38 (LTIL…VFWA), 75–95 (YSLL…LGLM), 112–132 (NFGV…IEGI), 179–199 (VVTG…PLAF), and 203–223 (IVWT…FIIL).

The protein belongs to the ATPase A chain family. F-type ATPases have 2 components, CF(1) - the catalytic core - and CF(0) - the membrane proton channel. CF(1) has five subunits: alpha(3), beta(3), gamma(1), delta(1), epsilon(1). CF(0) has three main subunits: a(1), b(2) and c(9-12). The alpha and beta chains form an alternating ring which encloses part of the gamma chain. CF(1) is attached to CF(0) by a central stalk formed by the gamma and epsilon chains, while a peripheral stalk is formed by the delta and b chains.

The protein localises to the cell membrane. Key component of the proton channel; it plays a direct role in the translocation of protons across the membrane. This is ATP synthase subunit a from Streptococcus agalactiae serotype Ia (strain ATCC 27591 / A909 / CDC SS700).